The chain runs to 260 residues: MSEVESQQSQETNGSSKFDVPEIELIIKASTIDGRRKGACLFCQEYFMDLYLLAELKTISLKVTTVDMQKPPPDFRTNFEATHPPILIDNGLAILENEKIERHIMKNIPGGYNLFVQDKEVATLIENLYVKLKLMLVKKDEAKNNALLSHLRKINDHLSARNTRFLTGDTMCCFDCELMPRLQHIRVAGKYFVDFEIPTHLTALWRYMYHMYQLDAFTQSCPADQDIINHYKLQQSLKMKKHEELETPTFTTYIPIDISE.

The helical transmembrane segment at 42–66 (FCQEYFMDLYLLAELKTISLKVTTV) threads the bilayer.

It belongs to the chloride channel CLIC family. In terms of tissue distribution, expressed in cardiac tubes.

It is found in the mitochondrion. It localises to the membrane. Might insert into membranes and form chloride ion channels. Channel activity depends on the pH. May play a role in ethanol sensitivity. The chain is Chloride intracellular channel Clic from Drosophila melanogaster (Fruit fly).